Reading from the N-terminus, the 189-residue chain is Phosphoheptose isomerase (189 aa).

The 156-residue stretch at 34-189 folds into the SIS domain; it reads LVDALGNGKK…CDLLEKRLFG (156 aa). 49–51 contributes to the substrate binding site; that stretch reads NGG. Residues His-58 and Glu-62 each coordinate Zn(2+). Substrate-binding positions include Glu-62, 91–92, 117–119, Ser-122, and Gln-169; these read ND and STS. 2 residues coordinate Zn(2+): Gln-169 and His-177.

It belongs to the SIS family. GmhA subfamily. As to quaternary structure, homotetramer. Zn(2+) serves as cofactor.

It is found in the cytoplasm. The catalysed reaction is 2 D-sedoheptulose 7-phosphate = D-glycero-alpha-D-manno-heptose 7-phosphate + D-glycero-beta-D-manno-heptose 7-phosphate. The protein operates within carbohydrate biosynthesis; D-glycero-D-manno-heptose 7-phosphate biosynthesis; D-glycero-alpha-D-manno-heptose 7-phosphate and D-glycero-beta-D-manno-heptose 7-phosphate from sedoheptulose 7-phosphate: step 1/1. Functionally, catalyzes the isomerization of sedoheptulose 7-phosphate in D-glycero-D-manno-heptose 7-phosphate. The sequence is that of Phosphoheptose isomerase from Geotalea uraniireducens (strain Rf4) (Geobacter uraniireducens).